The chain runs to 842 residues: Leucine--tRNA ligase (842 aa).

The 'HIGH' region motif lies at 44–55 (PYPSANGLHVGH). The short motif at 619 to 623 (KMSKS) is the 'KMSKS' region element. Position 622 (Lys622) interacts with ATP.

The protein belongs to the class-I aminoacyl-tRNA synthetase family.

The protein localises to the cytoplasm. The enzyme catalyses tRNA(Leu) + L-leucine + ATP = L-leucyl-tRNA(Leu) + AMP + diphosphate. This Borrelia hermsii (strain HS1 / DAH) protein is Leucine--tRNA ligase.